A 389-amino-acid chain; its full sequence is S-adenosylmethionine synthase (389 aa).

Residue histidine 15 participates in ATP binding. Mg(2+) is bound at residue aspartate 17. Residue glutamate 43 participates in K(+) binding. Positions 56 and 99 each coordinate L-methionine. A flexible loop region spans residues 99–109 (QSPDIAQGVNE). ATP contacts are provided by residues 166–168 (DAK), 234–235 (RF), aspartate 243, 249–250 (RK), alanine 266, and lysine 270. Aspartate 243 contacts L-methionine. Position 274 (lysine 274) interacts with L-methionine.

Belongs to the AdoMet synthase family. Homotetramer; dimer of dimers. Mg(2+) serves as cofactor. It depends on K(+) as a cofactor.

The protein localises to the cytoplasm. It catalyses the reaction L-methionine + ATP + H2O = S-adenosyl-L-methionine + phosphate + diphosphate. The protein operates within amino-acid biosynthesis; S-adenosyl-L-methionine biosynthesis; S-adenosyl-L-methionine from L-methionine: step 1/1. In terms of biological role, catalyzes the formation of S-adenosylmethionine (AdoMet) from methionine and ATP. The overall synthetic reaction is composed of two sequential steps, AdoMet formation and the subsequent tripolyphosphate hydrolysis which occurs prior to release of AdoMet from the enzyme. The protein is S-adenosylmethionine synthase of Neisseria meningitidis serogroup C / serotype 2a (strain ATCC 700532 / DSM 15464 / FAM18).